Here is a 908-residue protein sequence, read N- to C-terminus: GPMGIMGPRGPPGASGAPGPAGEPGEPGQTGPAGARGPPGPPGKAGEDGHPGKPGRPGERGVVGPQGARGFPGTPGIPGFKGIRGHNGIDGIKGQPGAPGVKGEPGAPGENGTPGQAGARGIPGERGRVGAPGPAGARGSDGSVGPVGPAGPIGSAGPPGFPGAPGPKGEIGPVGNPGPAGPAGPRGEVGIPGVSGPVGPPGNPGANGITGAKGAAGIPGVAGAPGIPGPRGIPGPVGAAGATGARGIVGEPGPAGSKGESGNKGEPGSAGPQGPPGPAGEEGKRGPNGEAGSTGPTGPPGIRGSRGIPGADGGSRGATGPAGVRGDSGRPGEPGIMGPRGFPGSPGNIGPAGKEGPVGIPGIDGRPGPTGPAGARGEPGNIGFPGPKGPTGDPGKNGDKGHAGIAGARGPAGPPGFQGIPGPAGTAGEVGKPGERGIPGEFGIPGPAGARGERGPPGESGAVGPAGPIGSRGPSGPPGPDGNKGEPGNIGAIGTAGPSGPSGIPGERGAAGIPGGKGEKGETGIRRGAPGAIGAPGPAGANGDRGEAGPAGPAGPAGPRGSPGERGEVGPAGPNGFAGPAGAAGQPGAKGERGTKGPKGENGPVGPTGPVGAAGPAGPNGPPGPAGSRGDGGPPGATGFPGAAGRTGPPGPAGITGPPGPPGAAGKEGIRGPRGDQGPVGRSGETGASGIPGFAGEKGPAGEPGTAGIPGTPGPQGIIGAPGIIGIPGSRGERGIPGVAGSIGEPGPIGIAGPPGARGPPGAVGNPGVNGAPGEAGRHGNRGEPGPAGSVGPAGAVGPRGPSGPQGIRGDKGEPGDKGPRGIPGIKGHNGIQGIPGIAGQHGDQGAPGAVGPAGPRGPAGPSGPAGKDGRIGHPGTVGPAGIRGSQGSQGPAGPPGPPGPPGPPGPS.

Over residues 1–36 (GPMGIMGPRGPPGASGAPGPAGEPGEPGQTGPAGAR) the composition is skewed to low complexity. 2 disordered regions span residues 1 to 211 (GPMG…GITG) and 227 to 908 (IPGP…PGPS). Over residues 45–59 (AGEDGHPGKPGRPGE) the composition is skewed to basic and acidic residues. Composition is skewed to low complexity over residues 129-158 (VGAP…SAGP), 183-197 (AGPR…VSGP), 234-249 (PGPV…RGIV), 293-309 (STGP…RGIP), 403-418 (AGIA…PGFQ), 465-474 (PAGPIGSRGP), 526-542 (RRGA…AGAN), and 569-589 (VGPA…QPGA). Positions 590-599 (KGERGTKGPK) are enriched in basic and acidic residues. Low complexity predominate over residues 602–617 (NGPVGPTGPVGAAGPA). Positions 627–636 (GSRGDGGPPG) are enriched in gly residues. 4 stretches are compositionally biased toward low complexity: residues 637–647 (ATGFPGAAGRT), 701–730 (AGEP…IPGS), 745–775 (EPGP…APGE), and 785–805 (PGPA…PSGP). Residues 809 to 820 (RGDKGEPGDKGP) are compositionally biased toward basic and acidic residues. Pro residues predominate over residues 893-908 (AGPPGPPGPPGPPGPS).

Belongs to the fibrillar collagen family. In terms of assembly, trimers of one alpha 2(I) and two alpha 1(I) chains. Interacts (via C-terminus) with TMEM131 (via PapD-L domain); the interaction is direct and is involved in assembly and TRAPPIII ER-to-Golgi transport complex-dependent secretion of collagen. Prolines at the third position of the tripeptide repeating unit (G-X-Y) are hydroxylated in some or all of the chains. As to expression, forms the fibrils of tendon, ligaments and bones. In bones, the fibrils are mineralized with calcium hydroxyapatite.

The protein resides in the secreted. It is found in the extracellular space. Its subcellular location is the extracellular matrix. Functionally, type I collagen is a member of group I collagen (fibrillar forming collagen). The protein is Collagen alpha-2(I) chain of Toxodon sp.